A 505-amino-acid polypeptide reads, in one-letter code: ATP synthase subunit alpha (505 aa).

171 to 178 (GDRQTGKT) provides a ligand contact to ATP.

The protein belongs to the ATPase alpha/beta chains family. F-type ATPases have 2 components, CF(1) - the catalytic core - and CF(0) - the membrane proton channel. CF(1) has five subunits: alpha(3), beta(3), gamma(1), delta(1), epsilon(1). CF(0) has three main subunits: a(1), b(2) and c(9-12). The alpha and beta chains form an alternating ring which encloses part of the gamma chain. CF(1) is attached to CF(0) by a central stalk formed by the gamma and epsilon chains, while a peripheral stalk is formed by the delta and b chains.

It is found in the cell inner membrane. It carries out the reaction ATP + H2O + 4 H(+)(in) = ADP + phosphate + 5 H(+)(out). In terms of biological role, produces ATP from ADP in the presence of a proton gradient across the membrane. The alpha chain is a regulatory subunit. In Campylobacter curvus (strain 525.92), this protein is ATP synthase subunit alpha.